Here is a 267-residue protein sequence, read N- to C-terminus: Type III pantothenate kinase (267 aa).

Residue D6–K13 coordinates ATP. Residues Y96 and G103–R106 each bind substrate. Catalysis depends on D105, which acts as the Proton acceptor. T131 serves as a coordination point for ATP. Substrate is bound at residue T181.

It belongs to the type III pantothenate kinase family. Homodimer. Requires NH4(+) as cofactor. K(+) is required as a cofactor.

The protein localises to the cytoplasm. It carries out the reaction (R)-pantothenate + ATP = (R)-4'-phosphopantothenate + ADP + H(+). It functions in the pathway cofactor biosynthesis; coenzyme A biosynthesis; CoA from (R)-pantothenate: step 1/5. Functionally, catalyzes the phosphorylation of pantothenate (Pan), the first step in CoA biosynthesis. Activates transcription of the pertussis toxin operon in a BvgAS-dependent manner. May interact with the alpha subunit of RNA polymerase. The chain is Type III pantothenate kinase (coaX) from Bordetella pertussis (strain Tohama I / ATCC BAA-589 / NCTC 13251).